A 343-amino-acid polypeptide reads, in one-letter code: Mas-related G-protein coupled receptor member F (343 aa).

At 1–44 the chain is on the extracellular side; it reads MAGNCSWEAHSTNQNKMCPGMSEARELYSRGFLTIEQIATLPPP. N-linked (GlcNAc...) asparagine glycosylation is present at Asn-4. The chain crosses the membrane as a helical span at residues 45–66; it reads AVTNYIFLLLCLCGLVGNGLVL. Residues 67–82 lie on the Cytoplasmic side of the membrane; sequence WFFGFSIKRTPFSIYF. The chain crosses the membrane as a helical span at residues 83–104; sequence LHLASADGMYLFSKAVIALLNM. Topologically, residues 105-123 are extracellular; that stretch reads GTFLGSFPDYIRRVSRIVG. A helical membrane pass occupies residues 124 to 144; the sequence is LCTFFTGVSLLPAISIERCVS. Topologically, residues 145-160 are cytoplasmic; the sequence is VIFPTWYWRRRPKRLS. A helical transmembrane segment spans residues 161-181; the sequence is AGVCALLWMLSFLVTSIHNYF. Topologically, residues 182–198 are extracellular; sequence CMFLGHEAPGTVCRNMD. Residues 199–220 traverse the membrane as a helical segment; the sequence is IALGILLFFLFCPLMVLPCLAL. Over 221-241 the chain is Cytoplasmic; the sequence is ILHVECRARRRQRSAKLNHVV. The helical transmembrane segment at 242–263 threads the bilayer; it reads LAIVSVFLVSSIYLGIDWFLFW. The Extracellular segment spans residues 264–273; it reads VFQIPAPFPE. Residues 274-294 traverse the membrane as a helical segment; it reads YVTDLCICINSSAKPIVYFLA. Residues 295-343 lie on the Cytoplasmic side of the membrane; sequence GRDKSQRLWEPLRVVFQRALRDGAEPGDAASSTPNTVTMEMQCPSGNAS. A disordered region spans residues 318–343; sequence AEPGDAASSTPNTVTMEMQCPSGNAS. Polar residues predominate over residues 324-343; it reads ASSTPNTVTMEMQCPSGNAS.

It belongs to the G-protein coupled receptor 1 family. Mas subfamily.

It localises to the cell membrane. In terms of biological role, orphan receptor. May bind to a neuropeptide and may regulate nociceptor function and/or development, including the sensation or modulation of pain. This chain is Mas-related G-protein coupled receptor member F (Mrgprf), found in Mus musculus (Mouse).